Consider the following 318-residue polypeptide: Probable cell division protein WhiA (318 aa).

The segment at residues 281 to 314 (SLKELGQMLVPPVGKSGVNHRLRKIEEISKKLKE) is a DNA-binding region (H-T-H motif).

This sequence belongs to the WhiA family.

Involved in cell division and chromosome segregation. The polypeptide is Probable cell division protein WhiA (Thermoanaerobacter pseudethanolicus (strain ATCC 33223 / 39E) (Clostridium thermohydrosulfuricum)).